The following is a 346-amino-acid chain: tRNA N6-adenosine threonylcarbamoyltransferase (346 aa).

2 residues coordinate Fe cation: His111 and His115. Substrate-binding positions include 134–138 (LVSGG), Asp167, Gly180, Asp184, and Asn280. Asp308 provides a ligand contact to Fe cation.

This sequence belongs to the KAE1 / TsaD family. Requires Fe(2+) as cofactor.

Its subcellular location is the cytoplasm. The enzyme catalyses L-threonylcarbamoyladenylate + adenosine(37) in tRNA = N(6)-L-threonylcarbamoyladenosine(37) in tRNA + AMP + H(+). In terms of biological role, required for the formation of a threonylcarbamoyl group on adenosine at position 37 (t(6)A37) in tRNAs that read codons beginning with adenine. Is involved in the transfer of the threonylcarbamoyl moiety of threonylcarbamoyl-AMP (TC-AMP) to the N6 group of A37, together with TsaE and TsaB. TsaD likely plays a direct catalytic role in this reaction. The protein is tRNA N6-adenosine threonylcarbamoyltransferase of Crocosphaera subtropica (strain ATCC 51142 / BH68) (Cyanothece sp. (strain ATCC 51142)).